The sequence spans 186 residues: Elongation factor P (186 aa).

Belongs to the elongation factor P family.

It is found in the cytoplasm. It participates in protein biosynthesis; polypeptide chain elongation. Functionally, involved in peptide bond synthesis. Stimulates efficient translation and peptide-bond synthesis on native or reconstituted 70S ribosomes in vitro. Probably functions indirectly by altering the affinity of the ribosome for aminoacyl-tRNA, thus increasing their reactivity as acceptors for peptidyl transferase. In Streptococcus gordonii (strain Challis / ATCC 35105 / BCRC 15272 / CH1 / DL1 / V288), this protein is Elongation factor P.